The chain runs to 147 residues: CRISP-1 (147 aa).

This sequence belongs to the CRISP family. As to expression, expressed by the venom gland.

It is found in the secreted. The sequence is that of CRISP-1 from Phoneutria keyserlingi (Brazilian wandering spider).